We begin with the raw amino-acid sequence, 472 residues long: WASH complex subunit 1 (472 aa).

A required for WASH complex assembly region spans residues 1-51 (MPQNRSVESQAYSLPLILPDLRREEAIHQITDTLQHLQTVSNDIFSRILQR). Disordered regions lie at residues 294-411 (DRQD…GGDL) and 429-472 (KVPA…DWES). A compositionally biased stretch (pro residues) spans 301-334 (LPPPPPPPPPPPPPPPPEPSALSPPAPPPPPLSI). The VCA stretch occupies residues 352 to 472 (QGAPKEVVNP…GDGDEDDWES (121 aa)). The WH2 domain occupies 364-386 (GRASLLESIRQAGGIGKANLRNV). Basic and acidic residues predominate over residues 385–400 (NVKEKKLEKKKMKEQE).

Belongs to the WASH1 family. Component of the WASH complex.

It is found in the early endosome membrane. Its subcellular location is the recycling endosome membrane. In terms of biological role, acts as a nucleation-promoting factor at the surface of endosomes, where it recruits and activates the Arp2/3 complex to induce actin polymerization, playing a key role in the fission of tubules that serve as transport intermediates during endosome sorting. The protein is WASH complex subunit 1 of Xenopus laevis (African clawed frog).